Reading from the N-terminus, the 1045-residue chain is Extracellular serine protease (1045 aa).

The first 27 residues, 1–27, serve as a signal peptide directing secretion; that stretch reads MILNKRLKLAYCVFLGCYGLSIHSSLA. The Peptidase S8 domain occupies 49–397; the sequence is QWGLEAISAE…WGRVNLRDAI (349 aa). Catalysis depends on charge relay system residues Asp76, His112, and Ser341. Residues 646 to 1045 constitute a propeptide, translocator domain; removed in mature form; that stretch reads SLASTENEKA…SVNAGLTWRF (400 aa). Positions 769 to 1045 constitute an Autotransporter domain; the sequence is IKADDNGAWA…SVNAGLTWRF (277 aa).

The protein belongs to the peptidase S8 family.

It localises to the secreted. The sequence is that of Extracellular serine protease from Serratia marcescens.